The primary structure comprises 513 residues: Putative thymidine phosphorylase (513 aa).

This sequence belongs to the thymidine/pyrimidine-nucleoside phosphorylase family. Type 2 subfamily.

The catalysed reaction is thymidine + phosphate = 2-deoxy-alpha-D-ribose 1-phosphate + thymine. The chain is Putative thymidine phosphorylase from Rhodopseudomonas palustris (strain BisB18).